The following is a 72-amino-acid chain: Potassium channel toxin epsilon-KTx 1.1 (72 aa).

A signal peptide spans Met-1 to Ser-30. 4 disulfides stabilise this stretch: Cys-34/Cys-42, Cys-37/Cys-58, Cys-41/Cys-51, and Cys-46/Cys-56. The propeptide occupies Gly-60 to Gln-72.

Belongs to the short scorpion toxin superfamily. Potassium channel inhibitor family. Epsilon-KTx 01 subfamily. In terms of tissue distribution, expressed by the venom gland.

It localises to the secreted. Potassium channel blocker. At 3 uM, this toxin blocks voltage-independently voltage-gated potassium channels rKv1.2/KCNA2 (25%), hKv1.3/KCNA3 (27%), rKv4.2/KCND2 (25%), Kv10.1/KCNH1/EAG1 (15%), Kv11/hERG (12%), and Shaker-IR (10%). On hKv1.3/KCNA3, the IC(50) is 17.1 +-3.3 uM. The sequence is that of Potassium channel toxin epsilon-KTx 1.1 from Tityus serrulatus (Brazilian scorpion).